Here is a 141-residue protein sequence, read N- to C-terminus: Lutropin subunit beta (141 aa).

Positions 1-20 (MEMLQGLLLLLLLSMGGAWA) are cleaved as a signal peptide. 6 disulfide bridges follow: cysteine 29/cysteine 77, cysteine 43/cysteine 92, cysteine 46/cysteine 130, cysteine 54/cysteine 108, cysteine 58/cysteine 110, and cysteine 113/cysteine 120. N-linked (GlcNAc...) asparagine glycosylation is found at asparagine 33 and asparagine 50.

Belongs to the glycoprotein hormones subunit beta family. Heterodimer of a common alpha chain and a unique beta chain which confers biological specificity to thyrotropin, lutropin, follitropin and gonadotropin.

Its subcellular location is the secreted. In terms of biological role, promotes spermatogenesis and ovulation by stimulating the testes and ovaries to synthesize steroids. The protein is Lutropin subunit beta (LHB) of Gorilla gorilla gorilla (Western lowland gorilla).